The primary structure comprises 314 residues: ATP synthase gamma chain (314 aa).

This sequence belongs to the ATPase gamma chain family. F-type ATPases have 2 components, CF(1) - the catalytic core - and CF(0) - the membrane proton channel. CF(1) has five subunits: alpha(3), beta(3), gamma(1), delta(1), epsilon(1). CF(0) has three main subunits: a, b and c.

The protein localises to the cell membrane. Produces ATP from ADP in the presence of a proton gradient across the membrane. The gamma chain is believed to be important in regulating ATPase activity and the flow of protons through the CF(0) complex. This chain is ATP synthase gamma chain, found in Cutibacterium acnes (strain DSM 16379 / KPA171202) (Propionibacterium acnes).